The chain runs to 554 residues: (E)-nerolidol synthase TPS18VF (554 aa).

(2E,6E)-farnesyl diphosphate-binding residues include R276, D313, D317, R455, and D458. The Mg(2+) site is built by D313 and D317. The short motif at 313–317 (DDIFD) is the DDXXD motif element. The Mg(2+) site is built by D458, S462, and E466.

This sequence belongs to the terpene synthase family. Tpsb subfamily. Mg(2+) is required as a cofactor. Requires Mn(2+) as cofactor. In terms of tissue distribution, highly expressed in glandular trichomes.

The enzyme catalyses (2E,6E)-farnesyl diphosphate + H2O = (6E)-nerolidol + diphosphate. The catalysed reaction is (2E)-geranyl diphosphate + H2O = (S)-linalool + diphosphate. Its pathway is secondary metabolite biosynthesis; terpenoid biosynthesis. Functionally, involved in sesquiterpene olefins biosynthesis, constituants of cannabinoids and terpenoids-rich resins. Catalyzes primarily the conversion of (2E)-farnesyl diphosphate to (E)-nerolidol, and the conversion of (2E)-geranyl diphosphate to (+)linalool. This Cannabis sativa (Hemp) protein is (E)-nerolidol synthase TPS18VF.